A 261-amino-acid chain; its full sequence is Glucose 1-dehydrogenase 1 (261 aa).

NADP(+) is bound at residue 11-35 (VITGSSTGLGKAMAIRFATEKAKVV). Ser-145 serves as a coordination point for substrate. Tyr-158 (proton acceptor) is an active-site residue.

It belongs to the short-chain dehydrogenases/reductases (SDR) family. Homotetramer.

The enzyme catalyses D-glucose + NAD(+) = D-glucono-1,5-lactone + NADH + H(+). The catalysed reaction is D-glucose + NADP(+) = D-glucono-1,5-lactone + NADPH + H(+). May play some role in spore germination. This is Glucose 1-dehydrogenase 1 (gdhI) from Priestia megaterium (Bacillus megaterium).